We begin with the raw amino-acid sequence, 151 residues long: Transcription antitermination protein NusB (151 aa).

This sequence belongs to the NusB family.

In terms of biological role, involved in transcription antitermination. Required for transcription of ribosomal RNA (rRNA) genes. Binds specifically to the boxA antiterminator sequence of the ribosomal RNA (rrn) operons. The sequence is that of Transcription antitermination protein NusB from Thermus thermophilus (strain ATCC BAA-163 / DSM 7039 / HB27).